Here is a 208-residue protein sequence, read N- to C-terminus: Small ribosomal subunit protein uS4 (208 aa).

Positions 97–160 (SRLDNIVFRL…KKNDKIAEAL (64 aa)) constitute an S4 RNA-binding domain.

Belongs to the universal ribosomal protein uS4 family. Part of the 30S ribosomal subunit. Contacts protein S5. The interaction surface between S4 and S5 is involved in control of translational fidelity.

Its function is as follows. One of the primary rRNA binding proteins, it binds directly to 16S rRNA where it nucleates assembly of the body of the 30S subunit. With S5 and S12 plays an important role in translational accuracy. This is Small ribosomal subunit protein uS4 from Mesoplasma florum (strain ATCC 33453 / NBRC 100688 / NCTC 11704 / L1) (Acholeplasma florum).